The following is a 155-amino-acid chain: Endoribonuclease YbeY (155 aa).

Zn(2+) is bound by residues His-117, His-121, and His-127.

Belongs to the endoribonuclease YbeY family. The cofactor is Zn(2+).

Its subcellular location is the cytoplasm. Single strand-specific metallo-endoribonuclease involved in late-stage 70S ribosome quality control and in maturation of the 3' terminus of the 16S rRNA. The chain is Endoribonuclease YbeY from Psychrobacter cryohalolentis (strain ATCC BAA-1226 / DSM 17306 / VKM B-2378 / K5).